The following is a 400-amino-acid chain: CCA-adding enzyme (400 aa).

2 residues coordinate ATP: Gly-27 and Arg-30. Residues Gly-27 and Arg-30 each coordinate CTP. Mg(2+) is bound by residues Asp-40 and Asp-42. Arg-111, Asp-154, Arg-157, Arg-160, and Arg-163 together coordinate ATP. Residues Arg-111, Asp-154, Arg-157, Arg-160, and Arg-163 each contribute to the CTP site.

It belongs to the tRNA nucleotidyltransferase/poly(A) polymerase family. Bacterial CCA-adding enzyme type 3 subfamily. In terms of assembly, homodimer. Requires Mg(2+) as cofactor.

The enzyme catalyses a tRNA precursor + 2 CTP + ATP = a tRNA with a 3' CCA end + 3 diphosphate. The catalysed reaction is a tRNA with a 3' CCA end + 2 CTP + ATP = a tRNA with a 3' CCACCA end + 3 diphosphate. Its function is as follows. Catalyzes the addition and repair of the essential 3'-terminal CCA sequence in tRNAs without using a nucleic acid template. Adds these three nucleotides in the order of C, C, and A to the tRNA nucleotide-73, using CTP and ATP as substrates and producing inorganic pyrophosphate. tRNA 3'-terminal CCA addition is required both for tRNA processing and repair. Also involved in tRNA surveillance by mediating tandem CCA addition to generate a CCACCA at the 3' terminus of unstable tRNAs. While stable tRNAs receive only 3'-terminal CCA, unstable tRNAs are marked with CCACCA and rapidly degraded. The protein is CCA-adding enzyme of Bacillus pumilus (strain SAFR-032).